The primary structure comprises 426 residues: Tyrosine--tRNA ligase (426 aa).

Tyr35 lines the L-tyrosine pocket. The 'HIGH' region motif lies at 40 to 49; that stretch reads PTADSLHIGH. L-tyrosine contacts are provided by Tyr172 and Gln176. The 'KMSKS' region signature appears at 232–236; sequence KLGKS. Lys235 serves as a coordination point for ATP. One can recognise an S4 RNA-binding domain in the interval 357–414; it reads ENIKDILVNSKLSKSKNNAKSVILSSSIRINNKKQKSIDFMFKKEDKLFNLFTLIKKG.

This sequence belongs to the class-I aminoacyl-tRNA synthetase family. TyrS type 1 subfamily. As to quaternary structure, homodimer.

It localises to the cytoplasm. The catalysed reaction is tRNA(Tyr) + L-tyrosine + ATP = L-tyrosyl-tRNA(Tyr) + AMP + diphosphate + H(+). Catalyzes the attachment of tyrosine to tRNA(Tyr) in a two-step reaction: tyrosine is first activated by ATP to form Tyr-AMP and then transferred to the acceptor end of tRNA(Tyr). The polypeptide is Tyrosine--tRNA ligase (Wigglesworthia glossinidia brevipalpis).